A 1497-amino-acid chain; its full sequence is Collagen alpha-1(XVII) chain (1497 aa).

Disordered stretches follow at residues 1–154 (MDVT…PSTR) and 167–186 (GSRSASVSPTRNSSNTLPIP). The Cytoplasmic segment spans residues 1–467 (MDVTKKNKRD…CGSCCSWWKW (467 aa)). The interval 1–566 (MDVTKKNKRD…MMEQENGNLR (566 aa)) is nonhelical region (NC16). A compositionally biased stretch (basic and acidic residues) spans 9-19 (RDGTEVTERIV). 2 stretches are compositionally biased toward polar residues: residues 57-96 (LTHGSSGYINSTGSTRGHASTSSYRRAHSPASTLPNSPGS) and 169-183 (RSASVSPTRNSSNTL). The tract at residues 145–230 (RLQSASPSTR…WSSTLPAGSS (86 aa)) is necessary for interaction with DST and for the recruitment of DST to hemidesmosome. Residues 468-488 (LLGLLLTWLLLLGLLFGLIAL) form a helical; Signal-anchor for type II membrane protein membrane-spanning segment. Topologically, residues 489–1497 (AEEVRKLKAR…RRRRSIAVKP (1009 aa)) are extracellular. Serine 544 is subject to Phosphoserine; by CK2. 3 disordered regions span residues 562-1011 (NGNL…SSSG), 1209-1234 (GLSFIPGPPGPPGPPGPRGPPGVSGA), and 1261-1316 (SFIV…TGGG). Residues 567-1482 (GSPGPKGDMG…KGEKGDKGDQ (916 aa)) are triple-helical region. Residues 590–602 (PGIPGPLGHPGPQ) are compositionally biased toward pro residues. Composition is skewed to low complexity over residues 604–635 (PKGQKGSVGDPGMEGPMGQRGREGPMGPRGEA), 661–673 (PGSVGPKGSSGSP), 735–748 (EPGAKGAMGPAGPD), and 774–796 (DPGKPGLTGPQGPQGLPGTPGRP). Composition is skewed to pro residues over residues 820–841 (PGPPGPPGAMGPPGPPGAPGPA), 858–881 (PPGPPGPRGPPGPSIPGPPGPRGP), and 907–916 (PPGPPGPPGP). 2 stretches are compositionally biased toward low complexity: residues 936–946 (GFSTSGSSSFG) and 968–987 (PGVPGALGIPSGPSEGGSSS). Composition is skewed to pro residues over residues 994 to 1004 (PPGPPGPPGPP), 1214 to 1228 (PGPPGPPGPPGPRGP), and 1266 to 1275 (PPGPPGPQGP). Positions 1289–1312 (SRGSSSSSHSSSVRRGSSYSSSMS) are enriched in low complexity. N-linked (GlcNAc...) asparagine glycosylation is present at asparagine 1421. The tract at residues 1434-1497 (GAIQGPPGQK…RRRRSIAVKP (64 aa)) is disordered. A compositionally biased stretch (pro residues) spans 1458-1469 (AGPPGHPGPPGP). Basic and acidic residues predominate over residues 1472–1481 (HKGEKGDKGD). Positions 1483 to 1497 (VYAGRRRRRSIAVKP) are nonhelical region (NC1). Over residues 1486–1497 (GRRRRRSIAVKP) the composition is skewed to basic residues.

As to quaternary structure, homotrimers of alpha 1(XVII)chains. Interacts (via cytoplasmic region) with ITGB4 (via cytoplasmic region). Interacts (via cytoplasmic region) with DST isoform 3 (via N-terminus). Interacts (via N-terminus) with PLEC. Interacts (via cytoplasmic region) with DSP. Post-translationally, the intracellular/endo domain is disulfide-linked. Prolines at the third position of the tripeptide repeating unit (G-X-Y) are hydroxylated in some or all of the chains. In terms of processing, the ectodomain is shedded from the surface of keratinocytes resulting in a 120-kDa soluble form, also named as 120 kDa linear IgA disease antigen. The shedding is mediated by membrane-bound metalloproteases. This cleavage is inhibited by phosphorylation at Ser-544. Detected in skin. In the cornea, it is detected in the epithelial basement membrane, the epithelial cells, and at a lower level in stromal cells (at protein level). Stratified squamous epithelia. Found in hemidesmosomes. Expressed in cornea, oral mucosa, esophagus, intestine, kidney collecting ducts, ureter, bladder, urethra and thymus but is absent in lung, blood vessels, skeletal muscle and nerves.

The protein localises to the cell junction. The protein resides in the hemidesmosome. Its subcellular location is the membrane. It is found in the secreted. It localises to the extracellular space. The protein localises to the extracellular matrix. The protein resides in the basement membrane. In terms of biological role, may play a role in the integrity of hemidesmosome and the attachment of basal keratinocytes to the underlying basement membrane. Functionally, the 120 kDa linear IgA disease antigen is an anchoring filament component involved in dermal-epidermal cohesion. Is the target of linear IgA bullous dermatosis autoantibodies. In Homo sapiens (Human), this protein is Collagen alpha-1(XVII) chain (COL17A1).